A 386-amino-acid polypeptide reads, in one-letter code: Protein U3 (386 aa).

The protein is Protein U3 (U3) of Human herpesvirus 6B (strain Z29) (HHV-6 variant B).